A 150-amino-acid chain; its full sequence is UPF0178 protein Bpet3884 (150 aa).

Belongs to the UPF0178 family.

This Bordetella petrii (strain ATCC BAA-461 / DSM 12804 / CCUG 43448) protein is UPF0178 protein Bpet3884.